Reading from the N-terminus, the 409-residue chain is Elongation factor Tu, chloroplastic (409 aa).

In terms of domain architecture, tr-type G spans 10-214; it reads KPHINIGTIG…QVDSYIPTPT (205 aa). The G1 stretch occupies residues 19–26; it reads GHVDHGKT. 19–26 lines the GTP pocket; sequence GHVDHGKT. Mg(2+) is bound at residue Thr26. Lys57 is modified (N6-methyllysine). The segment at 60-64 is G2; the sequence is GITIN. Residues 81 to 84 are G3; the sequence is DCPG. Residues 81–85 and 136–139 each bind GTP; these read DCPGH and NKED. The G4 stretch occupies residues 136 to 139; the sequence is NKED. The G5 stretch occupies residues 174 to 176; the sequence is SAL.

It belongs to the TRAFAC class translation factor GTPase superfamily. Classic translation factor GTPase family. EF-Tu/EF-1A subfamily.

Its subcellular location is the plastid. The protein resides in the chloroplast. The enzyme catalyses GTP + H2O = GDP + phosphate + H(+). In terms of biological role, GTP hydrolase that promotes the GTP-dependent binding of aminoacyl-tRNA to the A-site of ribosomes during protein biosynthesis. The chain is Elongation factor Tu, chloroplastic (tufA) from Euglena gracilis.